Consider the following 460-residue polypeptide: Bifunctional protein GlmU (460 aa).

Residues 1-232 (MALNVVILAA…AIEVEGANNR (232 aa)) form a pyrophosphorylase region. UDP-N-acetyl-alpha-D-glucosamine is bound by residues 8-11 (LAAG), Lys22, Gln73, 78-79 (GT), 100-102 (YGD), Gly137, Glu157, Asn172, and Asn230. Position 102 (Asp102) interacts with Mg(2+). Asn230 contacts Mg(2+). The linker stretch occupies residues 233 to 253 (VQLAQLERAYQAREAEKLMLA). An N-acetyltransferase region spans residues 254–460 (GANLRDPSRI…GWQRPVKIKK (207 aa)). 2 residues coordinate UDP-N-acetyl-alpha-D-glucosamine: Arg336 and Lys354. His366 functions as the Proton acceptor in the catalytic mechanism. Tyr369 and Asn380 together coordinate UDP-N-acetyl-alpha-D-glucosamine. Acetyl-CoA-binding positions include Ala383, 389 to 390 (NY), Ser408, Ala426, and Arg443.

The protein in the N-terminal section; belongs to the N-acetylglucosamine-1-phosphate uridyltransferase family. It in the C-terminal section; belongs to the transferase hexapeptide repeat family. As to quaternary structure, homotrimer. Mg(2+) is required as a cofactor.

It is found in the cytoplasm. The catalysed reaction is alpha-D-glucosamine 1-phosphate + acetyl-CoA = N-acetyl-alpha-D-glucosamine 1-phosphate + CoA + H(+). It catalyses the reaction N-acetyl-alpha-D-glucosamine 1-phosphate + UTP + H(+) = UDP-N-acetyl-alpha-D-glucosamine + diphosphate. The protein operates within nucleotide-sugar biosynthesis; UDP-N-acetyl-alpha-D-glucosamine biosynthesis; N-acetyl-alpha-D-glucosamine 1-phosphate from alpha-D-glucosamine 6-phosphate (route II): step 2/2. It participates in nucleotide-sugar biosynthesis; UDP-N-acetyl-alpha-D-glucosamine biosynthesis; UDP-N-acetyl-alpha-D-glucosamine from N-acetyl-alpha-D-glucosamine 1-phosphate: step 1/1. Its pathway is bacterial outer membrane biogenesis; LPS lipid A biosynthesis. Its function is as follows. Catalyzes the last two sequential reactions in the de novo biosynthetic pathway for UDP-N-acetylglucosamine (UDP-GlcNAc). The C-terminal domain catalyzes the transfer of acetyl group from acetyl coenzyme A to glucosamine-1-phosphate (GlcN-1-P) to produce N-acetylglucosamine-1-phosphate (GlcNAc-1-P), which is converted into UDP-GlcNAc by the transfer of uridine 5-monophosphate (from uridine 5-triphosphate), a reaction catalyzed by the N-terminal domain. The sequence is that of Bifunctional protein GlmU from Shewanella baltica (strain OS195).